We begin with the raw amino-acid sequence, 1478 residues long: GTPase-activating protein and VPS9 domain-containing protein 1 (1478 aa).

One can recognise a Ras-GAP domain in the interval 147–385 (SYLLQVLRYL…AAFLDVVIGG (239 aa)). The residue at position 227 (S227) is a Phosphoserine. A phosphothreonine mark is found at T390 and T458. A Phosphotyrosine modification is found at Y460. S466 carries the post-translational modification Phosphoserine. T470 carries the phosphothreonine modification. S566 and S569 each carry phosphoserine. Disordered stretches follow at residues 574–608 (GISE…GSNG), 739–820 (ESCS…PPSQ), and 846–874 (HYAR…LPNF). A compositionally biased stretch (polar residues) spans 578 to 588 (GPSNRSNSVSS). Phosphoserine occurs at positions 742, 746, and 757. Over residues 758 to 777 (SRPSTPGLSVVSGISATSED) the composition is skewed to polar residues. T762 is modified (phosphothreonine). S766 is modified (phosphoserine). A compositionally biased stretch (basic and acidic residues) spans 778 to 789 (IPNKIEDLRSEC). 6 positions are modified to phosphoserine: S876, S902, S903, S908, S914, and S966. A compositionally biased stretch (basic and acidic residues) spans 889–902 (QRHSYPERLVRSRS). Disordered stretches follow at residues 889 to 1023 (QRHS…PRLS) and 1043 to 1064 (TSPS…DRDL). Composition is skewed to basic and acidic residues over residues 954 to 975 (DSSR…DRNR) and 997 to 1008 (EKQEKDKDDLGP). Over residues 1012 to 1023 (STLTDDPSPRLS) the composition is skewed to polar residues. S1019, S1046, S1096, and S1103 each carry phosphoserine. Residues 1338-1478 (ILRDQVLHEH…EFIKTIDDRK (141 aa)) form the VPS9 domain.

Belongs to the GAPVD1 family. As to quaternary structure, interacts with TRIP10/CIP4. Interacts with RAB5A. (Microbial infection) Interacts with P.falciparum (strain 3D7) CK1. As to expression, expressed in erythrocytes (at protein level).

It localises to the membrane. It is found in the endosome. Functionally, acts both as a GTPase-activating protein (GAP) and a guanine nucleotide exchange factor (GEF), and participates in various processes such as endocytosis, insulin receptor internalization or LC2A4/GLUT4 trafficking. Acts as a GEF for the Ras-related protein RAB31 by exchanging bound GDP for free GTP, leading to regulate LC2A4/GLUT4 trafficking. In the absence of insulin, it maintains RAB31 in an active state and promotes a futile cycle between LC2A4/GLUT4 storage vesicles and early endosomes, retaining LC2A4/GLUT4 inside the cells. Upon insulin stimulation, it is translocated to the plasma membrane, releasing LC2A4/GLUT4 from intracellular storage vesicles. Also involved in EGFR trafficking and degradation, possibly by promoting EGFR ubiquitination and subsequent degradation by the proteasome. Has GEF activity for Rab5 and GAP activity for Ras. The chain is GTPase-activating protein and VPS9 domain-containing protein 1 (GAPVD1) from Homo sapiens (Human).